A 117-amino-acid polypeptide reads, in one-letter code: Urease subunit beta (117 aa).

A disordered region spans residues 95 to 117; sequence NAVNGKLDGGPHPGVPATERGAK.

Belongs to the urease beta subunit family. Heterotrimer of UreA (gamma), UreB (beta) and UreC (alpha) subunits. Three heterotrimers associate to form the active enzyme.

The protein resides in the cytoplasm. It carries out the reaction urea + 2 H2O + H(+) = hydrogencarbonate + 2 NH4(+). It participates in nitrogen metabolism; urea degradation; CO(2) and NH(3) from urea (urease route): step 1/1. The sequence is that of Urease subunit beta from Pseudarthrobacter chlorophenolicus (strain ATCC 700700 / DSM 12829 / CIP 107037 / JCM 12360 / KCTC 9906 / NCIMB 13794 / A6) (Arthrobacter chlorophenolicus).